We begin with the raw amino-acid sequence, 426 residues long: Serine--tRNA ligase (426 aa).

233–235 (TAE) contributes to the L-serine binding site. 264-266 (RSE) serves as a coordination point for ATP. Residue glutamate 287 participates in L-serine binding. 351–354 (EISS) lines the ATP pocket. Serine 387 lines the L-serine pocket.

This sequence belongs to the class-II aminoacyl-tRNA synthetase family. Type-1 seryl-tRNA synthetase subfamily. In terms of assembly, homodimer. The tRNA molecule binds across the dimer.

The protein resides in the cytoplasm. The enzyme catalyses tRNA(Ser) + L-serine + ATP = L-seryl-tRNA(Ser) + AMP + diphosphate + H(+). It carries out the reaction tRNA(Sec) + L-serine + ATP = L-seryl-tRNA(Sec) + AMP + diphosphate + H(+). Its pathway is aminoacyl-tRNA biosynthesis; selenocysteinyl-tRNA(Sec) biosynthesis; L-seryl-tRNA(Sec) from L-serine and tRNA(Sec): step 1/1. Catalyzes the attachment of serine to tRNA(Ser). Is also able to aminoacylate tRNA(Sec) with serine, to form the misacylated tRNA L-seryl-tRNA(Sec), which will be further converted into selenocysteinyl-tRNA(Sec). The protein is Serine--tRNA ligase of Azotobacter vinelandii (strain DJ / ATCC BAA-1303).